Reading from the N-terminus, the 217-residue chain is Probable lipoprotein CPn_0875/CP_0994/CPj0875/CpB0904 (217 aa).

Residues 1–21 (MKRVIYKTIFCGLTLLTSLSS) form the signal peptide. Residue Cys-22 is the site of N-palmitoyl cysteine attachment. A lipid anchor (S-diacylglycerol cysteine) is attached at Cys-22.

The protein belongs to the chlamydial CPn_0875/CT_734/TC_0107 family.

The protein localises to the cell membrane. The sequence is that of Probable lipoprotein CPn_0875/CP_0994/CPj0875/CpB0904 from Chlamydia pneumoniae (Chlamydophila pneumoniae).